Here is an 807-residue protein sequence, read N- to C-terminus: Probable E3 ubiquitin-protein ligase mug30 (807 aa).

Positions 453-807 constitute an HECT domain; that stretch reads RNKDFRKALK…LLETNGFNIR (355 aa). Residue cysteine 775 is the Glycyl thioester intermediate of the active site.

It is found in the cytoplasm. It localises to the cytoskeleton. The protein resides in the microtubule organizing center. The protein localises to the spindle pole body. It catalyses the reaction S-ubiquitinyl-[E2 ubiquitin-conjugating enzyme]-L-cysteine + [acceptor protein]-L-lysine = [E2 ubiquitin-conjugating enzyme]-L-cysteine + N(6)-ubiquitinyl-[acceptor protein]-L-lysine.. It participates in protein modification; protein ubiquitination. Its function is as follows. Probable E3 ubiquitin-protein ligase. Has a role in meiosis. In Schizosaccharomyces pombe (strain 972 / ATCC 24843) (Fission yeast), this protein is Probable E3 ubiquitin-protein ligase mug30 (mug30).